Reading from the N-terminus, the 112-residue chain is uncharacterized protein (112 aa).

A signal peptide spans 1-29 (MINLHRLCIIHVVATLLSTLLSLISVAIS). A glycan (N-linked (GlcNAc...) asparagine) is linked at asparagine 84. The interval 84-112 (NLSKGYNQRPEGSKEESHMVVKEKRKGDH) is disordered. Positions 94–112 (EGSKEESHMVVKEKRKGDH) are enriched in basic and acidic residues.

Its subcellular location is the secreted. This is an uncharacterized protein from Homo sapiens (Human).